The primary structure comprises 224 residues: Ribosomal RNA large subunit methyltransferase E (224 aa).

The S-adenosyl-L-methionine site is built by Gly-60, Trp-62, Asp-93, Asp-109, and Asp-137. Lys-177 serves as the catalytic Proton acceptor.

Belongs to the class I-like SAM-binding methyltransferase superfamily. RNA methyltransferase RlmE family.

The protein resides in the cytoplasm. The catalysed reaction is uridine(2552) in 23S rRNA + S-adenosyl-L-methionine = 2'-O-methyluridine(2552) in 23S rRNA + S-adenosyl-L-homocysteine + H(+). Its function is as follows. Specifically methylates the uridine in position 2552 of 23S rRNA at the 2'-O position of the ribose in the fully assembled 50S ribosomal subunit. The protein is Ribosomal RNA large subunit methyltransferase E of Polynucleobacter asymbioticus (strain DSM 18221 / CIP 109841 / QLW-P1DMWA-1) (Polynucleobacter necessarius subsp. asymbioticus).